A 215-amino-acid chain; its full sequence is FBD domain-containing protein At3g58975 (215 aa).

Residues 122 to 199 form the FBD domain; it reads RSLTSCPVKK…KLSSCNVQLL (78 aa).

This is FBD domain-containing protein At3g58975 from Arabidopsis thaliana (Mouse-ear cress).